The chain runs to 329 residues: Glycerol-3-phosphate dehydrogenase [NAD(P)+] (329 aa).

Residues Trp-11 and Lys-101 each contribute to the NADPH site. Sn-glycerol 3-phosphate contacts are provided by Lys-101, Gly-132, and Ser-134. Position 136 (Ala-136) interacts with NADPH. Residues Lys-188, Asp-241, Ser-251, Arg-252, and Asn-253 each coordinate sn-glycerol 3-phosphate. Lys-188 (proton acceptor) is an active-site residue. Residue Arg-252 coordinates NADPH. Glu-278 is a binding site for NADPH.

Belongs to the NAD-dependent glycerol-3-phosphate dehydrogenase family.

It is found in the cytoplasm. The catalysed reaction is sn-glycerol 3-phosphate + NAD(+) = dihydroxyacetone phosphate + NADH + H(+). It carries out the reaction sn-glycerol 3-phosphate + NADP(+) = dihydroxyacetone phosphate + NADPH + H(+). Its pathway is membrane lipid metabolism; glycerophospholipid metabolism. Its function is as follows. Catalyzes the reduction of the glycolytic intermediate dihydroxyacetone phosphate (DHAP) to sn-glycerol 3-phosphate (G3P), the key precursor for phospholipid synthesis. This chain is Glycerol-3-phosphate dehydrogenase [NAD(P)+], found in Onion yellows phytoplasma (strain OY-M).